The following is a 239-amino-acid chain: Sugar fermentation stimulation protein homolog (239 aa).

It belongs to the SfsA family.

The sequence is that of Sugar fermentation stimulation protein homolog from Rhizobium meliloti (strain 1021) (Ensifer meliloti).